Here is a 196-residue protein sequence, read N- to C-terminus: UPF0056 membrane protein BU449 (196 aa).

A run of 6 helical transmembrane segments spans residues 8 to 28 (TILL…MTIL), 45 to 65 (IIAL…LIIL), 71 to 91 (TVSI…IFPS), 105 to 125 (FLVP…TLML), 134 to 154 (MFYL…ILLS), and 174 to 194 (MGLV…RAWF).

It belongs to the UPF0056 (MarC) family.

It localises to the cell membrane. The chain is UPF0056 membrane protein BU449 from Buchnera aphidicola subsp. Acyrthosiphon pisum (strain APS) (Acyrthosiphon pisum symbiotic bacterium).